The primary structure comprises 125 residues: Histone H2A (125 aa).

The segment covering 1 to 18 (MSGRGKGGKVKAKAKSRS) has biased composition (basic residues). Residues 1–21 (MSGRGKGGKVKAKAKSRSSRA) form a disordered region. The residue at position 2 (serine 2) is an N-acetylserine. At serine 2 the chain carries Phosphoserine. Lysine 119 is covalently cross-linked (Glycyl lysine isopeptide (Lys-Gly) (interchain with G-Cter in ubiquitin)).

The protein belongs to the histone H2A family. The nucleosome is a histone octamer containing two molecules each of H2A, H2B, H3 and H4 assembled in one H3-H4 heterotetramer and two H2A-H2B heterodimers. The octamer wraps approximately 147 bp of DNA. Monoubiquitination of Lys-119 gives a specific tag for epigenetic transcriptional repression. Post-translationally, phosphorylation on Ser-2 is enhanced during mitosis. Phosphorylation on Ser-2 directly represses transcription.

It localises to the nucleus. The protein localises to the chromosome. Functionally, core component of nucleosome. Nucleosomes wrap and compact DNA into chromatin, limiting DNA accessibility to the cellular machineries which require DNA as a template. Histones thereby play a central role in transcription regulation, DNA repair, DNA replication and chromosomal stability. DNA accessibility is regulated via a complex set of post-translational modifications of histones, also called histone code, and nucleosome remodeling. This Chironomus thummi thummi (Midge) protein is Histone H2A.